We begin with the raw amino-acid sequence, 86 residues long: Putative defensin-like protein 189 (86 aa).

A signal peptide spans 1–28 (MKMAKSANEIGFITCLVVFLVLTGQSNG). 4 cysteine pairs are disulfide-bonded: C39/C85, C52/C71, C57/C80, and C61/C82.

The protein belongs to the DEFL family.

Its subcellular location is the secreted. The sequence is that of Putative defensin-like protein 189 from Arabidopsis thaliana (Mouse-ear cress).